A 1173-amino-acid polypeptide reads, in one-letter code: Fas-binding factor 1 (1173 aa).

Residues 17-168 form a disordered region; it reads MALRTKKGLK…PSSSKTGLQY (152 aa). Over residues 46–56 the composition is skewed to basic and acidic residues; the sequence is KPAEPASHAKD. Over residues 80–93 the composition is skewed to low complexity; sequence AGADAEASSVSDAD. At serine 172 the chain carries Phosphoserine. 2 disordered regions span residues 180–225 and 241–566; these read LAGL…GDTP and TTLG…SSRE. A compositionally biased stretch (low complexity) spans 206-216; it reads SPGAAAGQGPS. Composition is skewed to basic and acidic residues over residues 247-258 and 287-299; these read DSPKAERKKTGD and TGER…DKKY. Polar residues-rich tracts occupy residues 331-345, 396-411, 468-477, and 533-544; these read VASS…QSVS, SPVQ…MTPS, VISQKKSQNL, and TGSSMSWSQATT. Coiled coils occupy residues 617–742, 808–917, and 975–1057; these read TAQL…QQAS, QQRE…MNKC, and CELR…VQRQ. Lysine 1002 is covalently cross-linked (Glycyl lysine isopeptide (Lys-Gly) (interchain with G-Cter in SUMO2)). Residues 1091–1124 form a disordered region; sequence ASLPGLPPRVQGPAASSRDAVQAPASSSPQCSQP. Residues 1110–1124 are compositionally biased toward low complexity; that stretch reads AVQAPASSSPQCSQP.

As to quaternary structure, interacts with PARD3. May interact with FAS cytoplasmic domain. Interacts with TRAPPC14. Broadly expressed.

The protein resides in the cytoplasm. It is found in the cytoskeleton. The protein localises to the microtubule organizing center. It localises to the centrosome. Its subcellular location is the centriole. The protein resides in the spindle pole. It is found in the cell junction. Its function is as follows. Keratin-binding protein required for epithelial cell polarization. Involved in apical junction complex (AJC) assembly via its interaction with PARD3. Required for ciliogenesis. The chain is Fas-binding factor 1 (Fbf1) from Mus musculus (Mouse).